A 721-amino-acid polypeptide reads, in one-letter code: Dipeptidyl-peptidase 5 (721 aa).

The signal sequence occupies residues 1–18 (MGAFRWLSIAAAASTALA). N-linked (GlcNAc...) asparagine glycans are attached at residues Asn75, Asn94, Asn151, and Asn254. The segment at 271-297 (ARPINGPDSPGTPKGIKGDSSSPVFSP) is disordered. Asn380 and Asn450 each carry an N-linked (GlcNAc...) asparagine glycan. The active-site Charge relay system is the Ser560. N-linked (GlcNAc...) asparagine glycosylation is present at Asn607. Active-site charge relay system residues include Asp643 and His675.

The protein belongs to the peptidase S9C family. In terms of processing, N-glycosylated. Expressed in mycelia and conidia.

It localises to the secreted. In terms of biological role, may be involved in metabolism of dipeptides or may affect host defense mechanisms. Has a substrate specificity limited to the hydrolysis of X-Ala, His-Ser, and Ser-Tyr dipeptides at a neutral pH optimum. The protein is Dipeptidyl-peptidase 5 of Aspergillus fumigatus (strain ATCC MYA-4609 / CBS 101355 / FGSC A1100 / Af293) (Neosartorya fumigata).